The chain runs to 169 residues: Procalin (169 aa).

The signal sequence occupies residues 1-18; the sequence is MKTFIVITFIGILSYAYA. Disulfide bonds link cysteine 21–cysteine 125, cysteine 54–cysteine 168, and cysteine 83–cysteine 97.

The protein belongs to the calycin superfamily. Triabin family. Expressed in salivary glands.

The protein localises to the secreted. The protein is Procalin of Hospesneotomae protracta (Western bloodsucking conenose).